The sequence spans 224 residues: Probable GTP-binding protein EngB (224 aa).

The region spanning serine 27–glutamine 201 is the EngB-type G domain. GTP is bound by residues glycine 35–serine 42, glycine 62–leucine 66, aspartate 80–glycine 83, threonine 147–aspartate 150, and phenylalanine 180–serine 182. Mg(2+)-binding residues include serine 42 and threonine 64. A disordered region spans residues glutamate 205–glutamate 224.

It belongs to the TRAFAC class TrmE-Era-EngA-EngB-Septin-like GTPase superfamily. EngB GTPase family. Requires Mg(2+) as cofactor.

Its function is as follows. Necessary for normal cell division and for the maintenance of normal septation. The protein is Probable GTP-binding protein EngB of Colwellia psychrerythraea (strain 34H / ATCC BAA-681) (Vibrio psychroerythus).